A 300-amino-acid chain; its full sequence is Tyrosine recombinase XerD (300 aa).

The region spanning 6 to 89 (LFHKRLIEQF…ALKVFFHFLK (84 aa)) is the Core-binding (CB) domain. Positions 108 to 293 (RLPSILSTEE…ASESLIEKFH (186 aa)) constitute a Tyr recombinase domain. Active-site residues include R152, K174, H245, R248, and H271. The active-site O-(3'-phospho-DNA)-tyrosine intermediate is Y280.

It belongs to the 'phage' integrase family. XerD subfamily. In terms of assembly, forms a cyclic heterotetrameric complex composed of two molecules of XerC and two molecules of XerD.

The protein resides in the cytoplasm. Site-specific tyrosine recombinase, which acts by catalyzing the cutting and rejoining of the recombining DNA molecules. The XerC-XerD complex is essential to convert dimers of the bacterial chromosome into monomers to permit their segregation at cell division. It also contributes to the segregational stability of plasmids. The polypeptide is Tyrosine recombinase XerD (Chlamydia trachomatis serovar D (strain ATCC VR-885 / DSM 19411 / UW-3/Cx)).